Here is a 179-residue protein sequence, read N- to C-terminus: Adenine phosphoribosyltransferase (179 aa).

The protein belongs to the purine/pyrimidine phosphoribosyltransferase family. Homodimer.

The protein resides in the cytoplasm. The catalysed reaction is AMP + diphosphate = 5-phospho-alpha-D-ribose 1-diphosphate + adenine. It participates in purine metabolism; AMP biosynthesis via salvage pathway; AMP from adenine: step 1/1. Catalyzes a salvage reaction resulting in the formation of AMP, that is energically less costly than de novo synthesis. In Nitrobacter winogradskyi (strain ATCC 25391 / DSM 10237 / CIP 104748 / NCIMB 11846 / Nb-255), this protein is Adenine phosphoribosyltransferase.